Reading from the N-terminus, the 255-residue chain is 5-oxoprolinase subunit A 2 (255 aa).

It belongs to the LamB/PxpA family. As to quaternary structure, forms a complex composed of PxpA, PxpB and PxpC.

The catalysed reaction is 5-oxo-L-proline + ATP + 2 H2O = L-glutamate + ADP + phosphate + H(+). In terms of biological role, catalyzes the cleavage of 5-oxoproline to form L-glutamate coupled to the hydrolysis of ATP to ADP and inorganic phosphate. This Agrobacterium fabrum (strain C58 / ATCC 33970) (Agrobacterium tumefaciens (strain C58)) protein is 5-oxoprolinase subunit A 2.